The sequence spans 104 residues: L-rhamnose mutarotase (104 aa).

Substrate is bound at residue tyrosine 18. The active-site Proton donor is histidine 22. Residues tyrosine 41 and 76–77 (WW) contribute to the substrate site.

This sequence belongs to the rhamnose mutarotase family. Homodimer.

It is found in the cytoplasm. The catalysed reaction is alpha-L-rhamnose = beta-L-rhamnose. It functions in the pathway carbohydrate metabolism; L-rhamnose metabolism. Involved in the anomeric conversion of L-rhamnose. The polypeptide is L-rhamnose mutarotase (Salmonella newport (strain SL254)).